The primary structure comprises 138 residues: Large ribosomal subunit protein uL11c (138 aa).

It belongs to the universal ribosomal protein uL11 family. As to quaternary structure, part of the ribosomal stalk of the 50S ribosomal subunit. Interacts with L10 and the large rRNA to form the base of the stalk. L10 forms an elongated spine to which L12 dimers bind in a sequential fashion forming a multimeric L10(L12)X complex.

It localises to the plastid. It is found in the chloroplast. Its function is as follows. Forms part of the ribosomal stalk which helps the ribosome interact with GTP-bound translation factors. In Cyanidioschyzon merolae (strain NIES-3377 / 10D) (Unicellular red alga), this protein is Large ribosomal subunit protein uL11c.